Here is a 180-residue protein sequence, read N- to C-terminus: MKMLLLLCLGLTLVCVHAEEASSTGRNFNVEKINGEWHTIILASDKREKIEDNGNFRLFLEQIHVLENSLVLKFHTVRDEECSELSMVADKTEKAGEYSVTYDGFNTFTIPKTDYDNFLMAHLINEKDGETFQLMGLYGREPDLSSDIKERFAQLCEEHGILRENIIDLSNANRCLQARE.

The first 18 residues, 1-18, serve as a signal peptide directing secretion; that stretch reads MKMLLLLCLGLTLVCVHA. Cysteine 82 and cysteine 175 form a disulfide bridge.

Belongs to the calycin superfamily. Lipocalin family. In terms of tissue distribution, abundant in the urine of adult male mice but absent from that of females.

The protein resides in the secreted. Its function is as follows. Binds pheromones that are released from drying urine of males. These pheromones affect the sexual behavior of females. The polypeptide is Major urinary protein 6 (Mup6) (Mus musculus (Mouse)).